Reading from the N-terminus, the 291-residue chain is ATP synthase gamma chain (291 aa).

It belongs to the ATPase gamma chain family. F-type ATPases have 2 components, CF(1) - the catalytic core - and CF(0) - the membrane proton channel. CF(1) has five subunits: alpha(3), beta(3), gamma(1), delta(1), epsilon(1). CF(0) has three main subunits: a, b and c.

Its subcellular location is the cell inner membrane. Produces ATP from ADP in the presence of a proton gradient across the membrane. The gamma chain is believed to be important in regulating ATPase activity and the flow of protons through the CF(0) complex. This chain is ATP synthase gamma chain, found in Sinorhizobium medicae (strain WSM419) (Ensifer medicae).